A 392-amino-acid polypeptide reads, in one-letter code: Alaserpin (392 aa).

An N-terminal signal peptide occupies residues 1–16 (MKIIMCIFGLAALAMA). N-linked (GlcNAc...) asparagine glycosylation is present at Asn-85.

Belongs to the serpin family. Hemolymph.

It localises to the secreted. It is found in the extracellular space. Its function is as follows. Inhibits elastase. This chain is Alaserpin, found in Manduca sexta (Tobacco hawkmoth).